A 686-amino-acid chain; its full sequence is ATP-dependent zinc metalloprotease FTSH 1, chloroplastic (686 aa).

A chloroplast-targeting transit peptide spans 1-16 (MAPPCSISSASHLLIT). The chain crosses the membrane as a helical span at residues 173-193 (FLAFVGNLLFPFLAFAGLFFL). An ATP-binding site is contributed by 272–279 (GPPGTGKT). Position 494 (His494) interacts with Zn(2+). The active site involves Glu495. The Zn(2+) site is built by His498 and Asp575.

It in the N-terminal section; belongs to the AAA ATPase family. In the C-terminal section; belongs to the peptidase M41 family. Requires Zn(2+) as cofactor.

It localises to the plastid. The protein localises to the chloroplast thylakoid membrane. Its function is as follows. Probable ATP-dependent zinc metallopeptidase. The sequence is that of ATP-dependent zinc metalloprotease FTSH 1, chloroplastic (FTSH1) from Oryza sativa subsp. japonica (Rice).